Consider the following 329-residue polypeptide: DNA-directed RNA polymerase subunit alpha (329 aa).

The tract at residues 1 to 235 is alpha N-terminal domain (alpha-NTD); the sequence is MQGSVTEFLK…EQLEAFVDLR (235 aa). The interval 249-329 is alpha C-terminal domain (alpha-CTD); that stretch reads FDPILLRPVD…NWPPASIADE (81 aa).

This sequence belongs to the RNA polymerase alpha chain family. Homodimer. The RNAP catalytic core consists of 2 alpha, 1 beta, 1 beta' and 1 omega subunit. When a sigma factor is associated with the core the holoenzyme is formed, which can initiate transcription.

The catalysed reaction is RNA(n) + a ribonucleoside 5'-triphosphate = RNA(n+1) + diphosphate. In terms of biological role, DNA-dependent RNA polymerase catalyzes the transcription of DNA into RNA using the four ribonucleoside triphosphates as substrates. The polypeptide is DNA-directed RNA polymerase subunit alpha (Shigella dysenteriae serotype 1 (strain Sd197)).